We begin with the raw amino-acid sequence, 100 residues long: Small ribosomal subunit protein uS14c (100 aa).

The protein belongs to the universal ribosomal protein uS14 family. As to quaternary structure, part of the 30S ribosomal subunit.

The protein localises to the plastid. It is found in the chloroplast. Functionally, binds 16S rRNA, required for the assembly of 30S particles. The sequence is that of Small ribosomal subunit protein uS14c from Chlorella vulgaris (Green alga).